The primary structure comprises 240 residues: Putative cytochrome c-type biogenesis protein DbsD-like (240 aa).

6 helical membrane-spanning segments follow: residues 32 to 52 (FVFF…ILPI), 74 to 94 (FFFC…ATLL), 104 to 124 (GIPV…LNIV), 149 to 169 (VGIG…LLIW), 176 to 196 (LFIG…PIII), and 218 to 238 (APFS…SSIL).

This sequence belongs to the DsbD family.

Its subcellular location is the plastid. The protein resides in the chloroplast membrane. Functionally, could be involved in cytochrome c synthesis. This is Putative cytochrome c-type biogenesis protein DbsD-like from Porphyra purpurea (Red seaweed).